The primary structure comprises 285 residues: MSTLEENYQYCHQIMKDYSKSFSYAFDMLPEQQRRAIWAIYAVCRIVDDSIDVHQDVEYLHKINRDVKAIEHQTTTTFESDDRIMTAFADAATHFQMNFQALYDLIDTVEADQHFEMFETDRGLLDYCYGVAGTVGVLLIPILATPPSDEAYEYGKQLGEALQLTNILRDVGEDYRNGRIYFSKARLNEFNVSIADEIERDQLSDNYIKIWEFYATLADNNYDMVLNHLDVYNEESRMIIELAAQVYRGILTEVRKADYSLKDRAYVSKWKKHKIYRNLKKKYKD.

Residues 18–21 (YSKS), Y41, and R45 each bind (2E,6E)-farnesyl diphosphate. Positions 48 and 52 each coordinate Mg(2+). Q163 contributes to the (2E,6E)-farnesyl diphosphate binding site. A Mg(2+)-binding site is contributed by N166. R169 contributes to the (2E,6E)-farnesyl diphosphate binding site. D170 contacts Mg(2+). Residue Y247 coordinates (2E,6E)-farnesyl diphosphate.

The protein belongs to the phytoene/squalene synthase family. CrtM subfamily. The cofactor is Mg(2+).

The catalysed reaction is 2 (2E,6E)-farnesyl diphosphate = 15-cis-4,4'-diapophytoene + 2 diphosphate. The protein operates within carotenoid biosynthesis; staphyloxanthin biosynthesis; staphyloxanthin from farnesyl diphosphate: step 1/5. Involved in the biosynthesis of the yellow-orange carotenoid staphyloxanthin, which plays a role in the virulence via its protective function against oxidative stress. Catalyzes the head-to-head condensation of two molecules of farnesyl diphosphate (FPP) into the colorless C(30) carotenoid 4,4'-diapophytoene (dehydrosqualene). The chain is 4,4'-diapophytoene synthase (crtM) from Staphylococcus haemolyticus (strain JCSC1435).